Reading from the N-terminus, the 129-residue chain is Large ribosomal subunit protein uL22 (129 aa).

Belongs to the universal ribosomal protein uL22 family. Part of the 50S ribosomal subunit.

Its function is as follows. This protein binds specifically to 23S rRNA; its binding is stimulated by other ribosomal proteins, e.g. L4, L17, and L20. It is important during the early stages of 50S assembly. It makes multiple contacts with different domains of the 23S rRNA in the assembled 50S subunit and ribosome. The globular domain of the protein is located near the polypeptide exit tunnel on the outside of the subunit, while an extended beta-hairpin is found that lines the wall of the exit tunnel in the center of the 70S ribosome. This is Large ribosomal subunit protein uL22 from Sinorhizobium medicae (strain WSM419) (Ensifer medicae).